A 241-amino-acid chain; its full sequence is Fatty acid metabolism regulator protein (241 aa).

The HTH gntR-type domain maps to 11–79 (QSPAALAEEY…HGKPTKVNNI (69 aa)). Residues 39–58 (ERDLADKIGVTRTTLREVLQ) constitute a DNA-binding region (H-T-H motif).

As to quaternary structure, homodimer.

The protein resides in the cytoplasm. Its function is as follows. Multifunctional regulator of fatty acid metabolism. This chain is Fatty acid metabolism regulator protein, found in Haemophilus influenzae (strain PittEE).